A 203-amino-acid chain; its full sequence is N-(5'-phosphoribosyl)anthranilate isomerase (203 aa).

It belongs to the TrpF family.

The enzyme catalyses N-(5-phospho-beta-D-ribosyl)anthranilate = 1-(2-carboxyphenylamino)-1-deoxy-D-ribulose 5-phosphate. It participates in amino-acid biosynthesis; L-tryptophan biosynthesis; L-tryptophan from chorismate: step 3/5. This chain is N-(5'-phosphoribosyl)anthranilate isomerase, found in Listeria innocua serovar 6a (strain ATCC BAA-680 / CLIP 11262).